A 349-amino-acid polypeptide reads, in one-letter code: N-formyl peptide receptor 3 (349 aa).

At 1-27 (METNFSIPLNETEEVLPEPAGHTVLWI) the chain is on the extracellular side. Asn4 and Asn10 each carry an N-linked (GlcNAc...) asparagine glycan. Residues 28–50 (FSLLVHGVTFIFGVLGNGLVIWV) traverse the membrane as a helical segment. The Cytoplasmic portion of the chain corresponds to 51 to 61 (AGFRMTRTVNT). The chain crosses the membrane as a helical span at residues 62 to 83 (ICYLNLALADFSFSAILPFHMV). At 84-100 (SVAMREKWPFGTFLCKL) the chain is on the extracellular side. A disulfide bridge links Cys98 with Cys176. The chain crosses the membrane as a helical span at residues 101-121 (VHVMIDINLFVSVYLITIIAL). The Cytoplasmic segment spans residues 122 to 140 (DRCICVLHPAWAQNHRTMS). A helical transmembrane segment spans residues 141–162 (LAKRVMTGLWILTIVLTLPNFI). Residues 163 to 205 (FWTTISTTNGDTYCIFNYPFWGDTVVERMNVFITMAKVSLILH) lie on the Extracellular side of the membrane. A helical transmembrane segment spans residues 206 to 226 (FIIGFSIPMSIITVCYGIIVA). Residues 227–242 (KIHKKRMTKSSRPLHI) lie on the Cytoplasmic side of the membrane. Residues 243 to 266 (FTAVVASFFICWFPYELTGILMAV) form a helical membrane-spanning segment. At 267–286 (WLKEILLNGKYKIILVLINP) the chain is on the extracellular side. The helical transmembrane segment at 287 to 306 (TSSLAFFNSCLNPSLYVFMG) threads the bilayer. The Cytoplasmic portion of the chain corresponds to 307–349 (HNFQERLIRSLPTSLERALTEVPDSAQTSNTHTTSASPPEETE). The tract at residues 327–349 (EVPDSAQTSNTHTTSASPPEETE) is disordered. The segment covering 331–343 (SAQTSNTHTTSAS) has biased composition (polar residues).

It belongs to the G-protein coupled receptor 1 family.

Its subcellular location is the cell membrane. Its function is as follows. Low affinity receptor for N-formyl-methionyl peptides, which are powerful neutrophils chemotactic factors. Binding of FMLP to the receptor causes activation of neutrophils. This response is mediated via a G-protein that activates a phosphatidylinositol-calcium second messenger system. The protein is N-formyl peptide receptor 3 (FPR3) of Macaca mulatta (Rhesus macaque).